Here is a 324-residue protein sequence, read N- to C-terminus: Short-chain dehydrogenase/reductase iacJ (324 aa).

NADP(+) is bound by residues I42, K66, D93, N120, Y204, K208, and T239. Y204 serves as the catalytic Proton donor. K208 (lowers pKa of active site Tyr) is an active-site residue.

Belongs to the short-chain dehydrogenases/reductases (SDR) family.

Its pathway is secondary metabolite biosynthesis. Short-chain dehydrogenase/reductase; part of the gene cluster that mediates the biosynthesis of iso-A82775C, a enylepoxycyclohexane and biosynthetic precursor of the chloropestolide anticancer natural products. Within the cluster, the prenyltransferase iacE prenylates siccayne to generate pestalodiol E, using dimethylallyl diphosphate (DMAPP) as cosubstrate. The probable oxidoreductase iacF is then involved in the epoxidation of pestalodiol F to pestalodiol F, which is further converted to pestalofone A by the short-chain dehydrogenase/reductase iacG. Iso-A82775C is subsequently generated from pestalofone A by the short-chain dehydrogenase/reductase iacC. Iso-A82775C is further condensed with maldoxin via a Diels-Alder reaction to produce the anticancer natural products chloropestolides A to E. This Pestalotiopsis fici (strain W106-1 / CGMCC3.15140) protein is Short-chain dehydrogenase/reductase iacJ.